The chain runs to 230 residues: Potassium/proton antiporter CemA (230 aa).

The next 4 helical transmembrane spans lie at 7–27, 106–126, 145–165, and 181–201; these read LPSF…SFSF, IILH…SFFL, LNDS…VGFH, and LGWV…PVIL.

Belongs to the CemA family.

Its subcellular location is the plastid. The protein localises to the chloroplast inner membrane. The enzyme catalyses K(+)(in) + H(+)(out) = K(+)(out) + H(+)(in). In terms of biological role, contributes to K(+)/H(+) antiport activity by supporting proton efflux to control proton extrusion and homeostasis in chloroplasts in a light-dependent manner to modulate photosynthesis. Prevents excessive induction of non-photochemical quenching (NPQ) under continuous-light conditions. Indirectly promotes efficient inorganic carbon uptake into chloroplasts. This chain is Potassium/proton antiporter CemA, found in Oryza nivara (Indian wild rice).